The following is a 1403-amino-acid chain: Sushi, nidogen and EGF-like domain-containing protein 1 (1403 aa).

The first 24 residues, 1–24, serve as a signal peptide directing secretion; it reads MRLGAAWALLLAAALGLGTRGVRA. The 156-residue stretch at 103 to 258 folds into the NIDO domain; that stretch reads AFWADVDNRR…GRWAFRIDDA (156 aa). 3 consecutive EGF-like domains span residues 268–309, 311–347, and 349–385; these read TTSV…RRCH, DVNE…PTCE, and AQSP…ATCE. Disulfide bonds link Cys272–Cys284, Cys278–Cys297, Cys299–Cys308, Cys315–Cys326, Cys320–Cys335, Cys337–Cys346, Cys353–Cys364, Cys358–Cys373, Cys375–Cys384, Cys391–Cys402, Cys396–Cys411, Cys413–Cys422, Cys433–Cys444, Cys438–Cys453, Cys455–Cys464, Cys472–Cys480, Cys474–Cys488, and Cys490–Cys499. Residue Asn292 is glycosylated (N-linked (GlcNAc...) asparagine). In terms of domain architecture, EGF-like 4; calcium-binding spans 387–423; sequence DVDECSSDPCQNGGSCVDLVGNYSCICVEPFEGPQCE. An N-linked (GlcNAc...) asparagine glycan is attached at Asn408. 2 EGF-like domains span residues 429–465 and 468–500; these read VPSP…LDCR and ILND…LLCE. Residue Asn484 is glycosylated (N-linked (GlcNAc...) asparagine). Asn536 carries an N-linked (GlcNAc...) asparagine glycan. 4 consecutive EGF-like domains span residues 541-577, 580-616, 619-655, and 657-693; these read LPSP…RHCE, RPHL…RHCE, KPDS…RHCE, and APSP…HRCQ. Intrachain disulfides connect Cys545-Cys556, Cys550-Cys565, Cys567-Cys576, Cys584-Cys595, Cys589-Cys604, Cys606-Cys615, Cys623-Cys634, Cys628-Cys643, Cys645-Cys654, Cys661-Cys672, Cys666-Cys681, Cys683-Cys692, Cys698-Cys739, Cys724-Cys751, Cys757-Cys768, Cys762-Cys777, Cys779-Cys788, Cys795-Cys806, Cys800-Cys815, Cys817-Cys826, Cys833-Cys844, Cys838-Cys853, Cys855-Cys864, Cys871-Cys882, Cys876-Cys891, and Cys893-Cys902. The Sushi domain maps to 696 to 753; that stretch reads VDCGHPEEVEHATMRFNGTHVGSVALYTCEPGFSLSALSHIRVCQPQGVWSQPPQCIE. Asn712 carries N-linked (GlcNAc...) asparagine glycosylation. Positions 753-789 constitute an EGF-like 11; calcium-binding domain; sequence EVDECRSQPCLHGGSCQDLIADYQCLCSPGYEGVHCE. The EGF-like 12; calcium-binding domain occupies 791–827; that stretch reads ETDECQAQPCRNGGSCRDLPRAFICQCPEGFVGIHCE. 2 EGF-like domains span residues 829–865 and 867–903; these read EVDA…YNCE and VSDP…KDCT. N-linked (GlcNAc...) asparagine glycosylation occurs at Asn886. 3 consecutive Fibronectin type-III domains span residues 908–1006, 1007–1105, and 1106–1200; these read PPTA…TRPR, PIED…TRPL, and PPAN…SPRD. N-linked (GlcNAc...) asparagine glycans are attached at residues Asn977, Asn1015, Asn1109, Asn1139, and Asn1298. The region spanning 1306–1342 is the EGF-like 15 domain; the sequence is TPGSCSEDACQNGGTCVPGADAHSCDCRPGFKGRHCE. 3 disulfides stabilise this stretch: Cys1310–Cys1321, Cys1315–Cys1330, and Cys1332–Cys1341.

Phosphorylated on serine and threonine residues. In terms of processing, N-glycosylated. As to expression, expressed in lung.

It is found in the secreted. Its subcellular location is the extracellular space. The protein resides in the extracellular matrix. This chain is Sushi, nidogen and EGF-like domain-containing protein 1, found in Mus musculus (Mouse).